The primary structure comprises 1891 residues: MGPGWAGLLQDKGGGSPSVVMSDTDSDEESAGGGPFSLTGFLFGNINGAGQLEGESVLDDECKKHLAGLGALGLGSLITELTANEELSGSDGALVNDEGWIRSREDAVDYSDINEVAEDESRRYQQTMGSLQPLCHTDYDEDDYDADCEDIDCKLMPPPPPPPGPLKKEKDQDDITGVSEDGEGIILPSIIAPSSLASEKVDFSSSSDSESEMGPQDAAQSESKDGQLTLPLAGIMQHDATKLLPSVTELFPEFRPGKVLRFLRLFGPGKNVPSVWRSARRKRKKKHRELIQEGQVQEEECSVELEVNQKSLWNYDYAPPPLPDQCLSDDEITMMAPVESKFSQSTGDTDKVMDTKPRVAEWRYGPARLWYDMLGVPEDGSGFDYGFKMKKTEHESTIKCNIMKKLRKLEENSGVDLLADENFLMVTQLHWEDDIIWDGEDVKHKGTKPQRASLAGWLPSSMTRNAMAYNVQQGFTATLDDDKPWYSIFPIDNEDLVYGRWEDNIIWDAQNMPRILEPPVLTLDPNDENLILEIPDEKEEATSNSPSKENKKESSLKKSRILLGKTGVIKEEPQQNMSQPEVKDPWNLSNDEYYYPKQQGLRGTFGGNIIQHSIPAVELRQPFFPTHMGPIKLRQFHRPPLKKYSFGALSQPGPHSVQPLLKHIKKKAKMREQERQASGGGEMFFMRTPQDLTGKDGDLILAEYSEENGPLMMQVGMATKIKNYYKRKPGKDPGAPDCKYGETVYCHTSPFLGSLHPGQLLQAFENNLFRAPIYLHKMPESDFLIIRTRQGYFIRELVDIFVVGQQCPLFEVPGPNSKRANTHIRDFLQVFIYRLFWKSKDRPRRIRMEDIKKAFPSHSESSIRKRLKLCADFKRTGMDSNWWVLKSDFRLPTEEEIRAMVSPEQCCAYYSMIAAEQRLKDAGYGEKSFFAPEEENEEDFQMKIDDEVRTAPWNTTRAFIAAMKGKCLLEVTGVADPTGCGEGFSYVKIPNKPTQQKDDKEPQPVKKTVTGTDADLRRLSLKNAKQLLRKFGVPEEEIKKLSRWEVIDVVRTMSTEQARSGEGPMSKFARGSRFSVAEHQERYKEECQRIFDLQNKVLSSTEVLSTDTDSSSAEDSDFEEMGKNIENMLQNKKTSSQLSREREEQERKELQRMLLAAGSAAAGNNHRDDDTASVTSLNSSATGRCLKIYRTFRDEEGKEYVRCETVRKATVIDAYVRIRTTKDEEFIRKFALFDEQHREEMRKERRRIQEQLRRLKRNQEKEKLKGPPEKKPKKMKERPDLKLKCGACGAIGHMRTNKFCPLYYQTNAPPSNPVAMTEEQEEELEKTVIHNDNEELIKVEGTKIVLGKQLIESADEVRRKSLVLKFPKQQLPPKKKRRVGTTVHCDYLNRPHKSIHRRRTDPMVTLSSILESIINDMRDLPNTYPFHTPVNAKVVKDYYKIITRPMDLQTLRENVRKRLYPSREEFREHLELIVKNSATYNGPKHSLTQISQSMLDLCDEKLKEKEDKLARLEKAINPLLDDDDQVAFSFILDNIVTQKMMAVPDSWPFHHPVNKKFVPDYYKVIVSPMDLETIRKNISKHKYQSRESFLDDVNLILANSVKYNGPESQYTKTAQEIVNVCHQTLTEYDEHLTQLEKDICTAKEAALEEAELESLDPMTPGPYTPQPPDLYDNNTSLSVSRDASVYQDESNLSVLDIPSATSEKQLTQEGGDGDGDLADEEEGTVQQPQASVLYEDLLMSEGEDDEEDAGSDEEGDNPFFAIQLSESGSDSDVESGSLRPKQPRVLQENTRMGMENEESMMSYEGDGGDASRGLEDSNISYGSYEEPDPKSNTQDTSFSSIGGYEVSEEEEDEEEQRSGPSVLSQVHLSEDEEDSEDFHSIAGDTDLDSDE.

Disordered regions lie at residues 1-34 (MGPGWAGLLQDKGGGSPSVVMSDTDSDEESAGGG), 154-180 (KLMPPPPPPPGPLKKEKDQDDITGVSE), and 197-224 (ASEKVDFSSSSDSESEMGPQDAAQSESK). A Protein kinase 1 domain is found at 1–435 (MGPGWAGLLQ…VTQLHWEDDI (435 aa)). Pro residues predominate over residues 156–165 (MPPPPPPPGP). The segment covering 197 to 208 (ASEKVDFSSSSD) has biased composition (low complexity). Phosphoserine; by autocatalysis is present on serine 328. A disordered region spans residues 535–556 (PDEKEEATSNSPSKENKKESSL). The interval 538–997 (KEEATSNSPS…KIPNKPTQQK (460 aa)) is histone acetyltransferase (HAT). An N6-acetyllysine modification is found at lysine 565. Residues lysine 570 and lysine 583 each participate in a glycyl lysine isopeptide (Lys-Gly) (interchain with G-Cter in SUMO2) cross-link. Disordered stretches follow at residues 990 to 1009 (PNKPTQQKDDKEPQPVKKTV), 1128 to 1148 (MLQNKKTSSQLSREREEQERK), and 1254 to 1278 (RLKRNQEKEKLKGPPEKKPKKMKER). Basic and acidic residues-rich tracts occupy residues 995–1004 (QQKDDKEPQP), 1139–1148 (SREREEQERK), and 1254–1270 (RLKRNQEKEKLKGPPEK). The segment at residues 1216–1294 (VRIRTTKDEE…CGACGAIGHM (79 aa)) is a DNA-binding region (HMG box). Positions 1363–1650 (VLKFPKQQLP…TAKEAALEEA (288 aa)) are interaction with ASF1A and ASF1B. Positions 1372-1379 (PPKKKRRV) match the Nuclear localization signal motif. Bromo domains follow at residues 1397–1505 (RRRT…LKEK) and 1519–1628 (LLDD…LTEY). Residues 1446-1891 (MDLQTLRENV…AGDTDLDSDE (446 aa)) form the Protein kinase 2 domain. 2 disordered regions span residues 1651 to 1676 (ELESLDPMTPGPYTPQPPDLYDNNTS) and 1690 to 1891 (SNLS…DSDE). The span at 1659 to 1668 (TPGPYTPQPP) shows a compositional bias: pro residues. Phosphoserine occurs at positions 1690 and 1693. Residues 1690–1708 (SNLSVLDIPSATSEKQLTQ) are compositionally biased toward polar residues. Acidic residues-rich tracts occupy residues 1711–1723 (GDGDGDLADEEEG) and 1741–1756 (EGEDDEEDAGSDEEGD). The segment covering 1764 to 1778 (LSESGSDSDVESGSL) has biased composition (low complexity). Phosphoserine is present on residues serine 1799, serine 1802, and serine 1820. Residues 1830–1840 (KSNTQDTSFSS) show a composition bias toward polar residues. Acidic residues predominate over residues 1846 to 1855 (VSEEEEDEEE). Serine 1847 carries the post-translational modification Phosphoserine. The span at 1858–1867 (SGPSVLSQVH) shows a compositional bias: polar residues.

The protein belongs to the TAF1 family. As to quaternary structure, component of the TFIID basal transcription factor complex, composed of TATA-box-binding protein TBP, and a number of TBP-associated factors (TAFs). TFIID consists of at least TBP, TAF1, TAF2, TAF3, TAF4, TAF5, TAF6, TAF7, TAF8, TAF9, TAF10, TAF11, TAF12 and TAF13. Interacts with TAF7; the interaction is direct. TAF1, when part of the TFIID complex, interacts with C-terminus of TP53. Part of a TFIID-containing RNA polymerase II pre-initiation complex that is composed of TBP and at least GTF2A1, GTF2A2, GTF2E1, GTF2E2, GTF2F1, GTF2H2, GTF2H3, GTF2H4, GTF2H5, GTF2B, TCEA1, ERCC2, ERCC3, TAF1, TAF2, TAF3, TAF4, TAF5, TAF6, TAF7, TAF8, TAF9, TAF10, TAF11, TAF12 and TAF13. Component of some MLL1/MLL complex, at least composed of the core components KMT2A/MLL1, ASH2L, HCFC1/HCF1, WDR5 and RBBP5, as well as the facultative components BACC1, CHD8, E2F6, HSP70, INO80C, KANSL1, LAS1L, MAX, MCRS1, MGA, KAT8/MOF, PELP1, PHF20, PRP31, RING2, RUVB1/TIP49A, RUVB2/TIP49B, SENP3, TAF1, TAF4, TAF6, TAF7, TAF9 and TEX10. RB1 interacts with the N-terminal domain of TAF1. Interacts with ASF1A and ASF1B. Interacts (via bromo domains) with acetylated lysine residues on the N-terminus of histone H1.4, H2A, H2B, H3 and H4 (in vitro). Requires Mg(2+) as cofactor. In terms of processing, phosphorylated by casein kinase II in vitro.

It is found in the nucleus. It catalyses the reaction L-seryl-[protein] + ATP = O-phospho-L-seryl-[protein] + ADP + H(+). It carries out the reaction L-threonyl-[protein] + ATP = O-phospho-L-threonyl-[protein] + ADP + H(+). The enzyme catalyses L-lysyl-[protein] + acetyl-CoA = N(6)-acetyl-L-lysyl-[protein] + CoA + H(+). Its activity is regulated as follows. Autophosphorylates on Ser residues. Inhibited by retinoblastoma tumor suppressor protein, RB1. Binding to TAF1 or CIITA inhibits the histone acetyltransferase activity. Its function is as follows. The TFIID basal transcription factor complex plays a major role in the initiation of RNA polymerase II (Pol II)-dependent transcription. TFIID recognizes and binds promoters with or without a TATA box via its subunit TBP, a TATA-box-binding protein, and promotes assembly of the pre-initiation complex (PIC). The TFIID complex consists of TBP and TBP-associated factors (TAFs), including TAF1, TAF2, TAF3, TAF4, TAF5, TAF6, TAF7, TAF8, TAF9, TAF10, TAF11, TAF12 and TAF13. TAF1 is the largest component and core scaffold of the TFIID complex, involved in nucleating complex assembly. TAF1 forms a promoter DNA binding subcomplex of TFIID, together with TAF7 and TAF2. Contains novel N- and C-terminal Ser/Thr kinase domains which can autophosphorylate or transphosphorylate other transcription factors. Phosphorylates TP53 on 'Thr-55' which leads to MDM2-mediated degradation of TP53. Phosphorylates GTF2A1 and GTF2F1 on Ser residues. Possesses DNA-binding activity. Exhibits histone acetyltransferase activity towards histones H3 and H4. Essential for progression of the G1 phase of the cell cycle. The polypeptide is Transcription initiation factor TFIID subunit 1 (Mus musculus (Mouse)).